A 180-amino-acid polypeptide reads, in one-letter code: MILVQLAAEEAQNPLIPEVPELVIGLLAFAIVFFVLGKKLLPNINKVLEERRAAIEGGIEEAEAMKVEAQSVLEQYKAQLAEARHEAARLRQEAQEQGATLITEMRAEGQRQREEIIAAGHAQLEADRKAAAQALRQDVGTLATDLAGKLVGESLEDHARQSRVIDRFLDGLEEKAEATR.

A helical membrane pass occupies residues 15–35; sequence LIPEVPELVIGLLAFAIVFFV.

This sequence belongs to the ATPase B chain family. As to quaternary structure, F-type ATPases have 2 components, F(1) - the catalytic core - and F(0) - the membrane proton channel. F(1) has five subunits: alpha(3), beta(3), gamma(1), delta(1), epsilon(1). F(0) has three main subunits: a(1), b(2) and c(10-14). The alpha and beta chains form an alternating ring which encloses part of the gamma chain. F(1) is attached to F(0) by a central stalk formed by the gamma and epsilon chains, while a peripheral stalk is formed by the delta and b chains.

It is found in the cell membrane. F(1)F(0) ATP synthase produces ATP from ADP in the presence of a proton or sodium gradient. F-type ATPases consist of two structural domains, F(1) containing the extramembraneous catalytic core and F(0) containing the membrane proton channel, linked together by a central stalk and a peripheral stalk. During catalysis, ATP synthesis in the catalytic domain of F(1) is coupled via a rotary mechanism of the central stalk subunits to proton translocation. Functionally, component of the F(0) channel, it forms part of the peripheral stalk, linking F(1) to F(0). The chain is ATP synthase subunit b from Streptomyces avermitilis (strain ATCC 31267 / DSM 46492 / JCM 5070 / NBRC 14893 / NCIMB 12804 / NRRL 8165 / MA-4680).